The chain runs to 2226 residues: Rotatin (2226 aa).

The tract at residues 295–346 (EARGPYHSPNPSPGSSSSRPSVVGRTGQRPRGDGQDWDAVSSSGSSSHTHVN) is disordered. A compositionally biased stretch (low complexity) spans 307–319 (PGSSSSRPSVVGR). Position 311 is a phosphoserine (Ser311). At Lys813 the chain carries N6-acetyllysine.

Belongs to the rotatin family. As to quaternary structure, interacts with PPP1R35; this interaction allows the mutual recruitment to the centriole.

Its subcellular location is the cytoplasm. The protein localises to the cytoskeleton. The protein resides in the cilium basal body. Functionally, involved in the genetic cascade that governs left-right specification. Required for correct asymmetric expression of NODAL, LEFTY and PITX2. The polypeptide is Rotatin (Mus musculus (Mouse)).